The sequence spans 283 residues: Thymidylate synthase (283 aa).

R22 provides a ligand contact to dUMP. Residue C160 is the Nucleophile of the active site. Residues 180–183, N191, and 221–223 each bind dUMP; these read RSCD and HIY. A (6R)-5,10-methylene-5,6,7,8-tetrahydrofolate-binding site is contributed by D183. S282 is a binding site for (6R)-5,10-methylene-5,6,7,8-tetrahydrofolate.

This sequence belongs to the thymidylate synthase family. Bacterial-type ThyA subfamily. In terms of assembly, homodimer.

It localises to the cytoplasm. It catalyses the reaction dUMP + (6R)-5,10-methylene-5,6,7,8-tetrahydrofolate = 7,8-dihydrofolate + dTMP. It participates in pyrimidine metabolism; dTTP biosynthesis. Catalyzes the reductive methylation of 2'-deoxyuridine-5'-monophosphate (dUMP) to 2'-deoxythymidine-5'-monophosphate (dTMP) while utilizing 5,10-methylenetetrahydrofolate (mTHF) as the methyl donor and reductant in the reaction, yielding dihydrofolate (DHF) as a by-product. This enzymatic reaction provides an intracellular de novo source of dTMP, an essential precursor for DNA biosynthesis. In Shewanella sediminis (strain HAW-EB3), this protein is Thymidylate synthase.